The primary structure comprises 206 residues: Small ribosomal subunit protein uS5 (206 aa).

The segment covering 1 to 15 (MTDTPTKQETQSNKD) has biased composition (polar residues). A disordered region spans residues 1 to 50 (MTDTPTKQETQSNKDNVPGAIPVEQKKNNRNDRKRNRRGDSKNLERDSDW). A compositionally biased stretch (basic and acidic residues) spans 38–50 (RGDSKNLERDSDW). In terms of domain architecture, S5 DRBM spans 50–113 (WQERVVQIRR…SDGKKNLVRV (64 aa)).

The protein belongs to the universal ribosomal protein uS5 family. As to quaternary structure, part of the 30S ribosomal subunit. Contacts proteins S4 and S8.

In terms of biological role, with S4 and S12 plays an important role in translational accuracy. Its function is as follows. Located at the back of the 30S subunit body where it stabilizes the conformation of the head with respect to the body. This is Small ribosomal subunit protein uS5 from Prochlorococcus marinus (strain MIT 9215).